Consider the following 211-residue polypeptide: Pyridoxine/pyridoxamine 5'-phosphate oxidase (211 aa).

Residues 7 to 10 (RRDY) and Lys-65 contribute to the substrate site. Residues 60-65 (RIVLLK), 75-76 (YT), Arg-81, Lys-82, and Gln-104 each bind FMN. Substrate contacts are provided by Tyr-122, Arg-126, and Ser-130. Residues 139–140 (QS) and Trp-184 each bind FMN. 190–192 (RLH) provides a ligand contact to substrate. Arg-194 is an FMN binding site.

This sequence belongs to the pyridoxamine 5'-phosphate oxidase family. In terms of assembly, homodimer. Requires FMN as cofactor.

The enzyme catalyses pyridoxamine 5'-phosphate + O2 + H2O = pyridoxal 5'-phosphate + H2O2 + NH4(+). It catalyses the reaction pyridoxine 5'-phosphate + O2 = pyridoxal 5'-phosphate + H2O2. It participates in cofactor metabolism; pyridoxal 5'-phosphate salvage; pyridoxal 5'-phosphate from pyridoxamine 5'-phosphate: step 1/1. The protein operates within cofactor metabolism; pyridoxal 5'-phosphate salvage; pyridoxal 5'-phosphate from pyridoxine 5'-phosphate: step 1/1. Its function is as follows. Catalyzes the oxidation of either pyridoxine 5'-phosphate (PNP) or pyridoxamine 5'-phosphate (PMP) into pyridoxal 5'-phosphate (PLP). This chain is Pyridoxine/pyridoxamine 5'-phosphate oxidase, found in Aliivibrio salmonicida (strain LFI1238) (Vibrio salmonicida (strain LFI1238)).